The following is a 203-amino-acid chain: Outer-membrane lipoprotein carrier protein (203 aa).

A signal peptide spans 1–19; the sequence is MKKSIVVLFSAVLPFAVFA.

The protein belongs to the LolA family. Monomer.

It localises to the periplasm. Functionally, participates in the translocation of lipoproteins from the inner membrane to the outer membrane. Only forms a complex with a lipoprotein if the residue after the N-terminal Cys is not an aspartate (The Asp acts as a targeting signal to indicate that the lipoprotein should stay in the inner membrane). The chain is Outer-membrane lipoprotein carrier protein from Shewanella amazonensis (strain ATCC BAA-1098 / SB2B).